A 217-amino-acid polypeptide reads, in one-letter code: KH domain-containing protein 3 (217 aa).

An involved in RNA binding region spans residues 1-40 (MDAPRRFPTLVQLMQPKAMPVEVLGHLPKRFSWFHSEFLK). The KH; atypical domain occupies 40 to 103 (KNPKVVRLEV…SYQEDTIKMI (64 aa)). The interval 129-217 (QKAETQRSSI…EDARDPVTRL (89 aa)) is disordered. A compositionally biased stretch (basic and acidic residues) spans 138-155 (IEVREAGTQRSVEVREAG). A phosphothreonine; by ATM mark is found at Thr-145 and Thr-156. Polar residues-rich tracts occupy residues 156 to 170 (TQRS…TQGS) and 177 to 194 (AGTQ…TQRS). At Ser-182 the chain carries Phosphoserine. The span at 205–217 (RFREDARDPVTRL) shows a compositional bias: basic and acidic residues.

This sequence belongs to the KHDC1 family. In terms of assembly, component of the subcortical maternal complex (SCMC), at least composed of NLRP5, KHDC3L, OOEP, and TLE6 isoform 1. Within the complex, interacts with NLRP5, KHDC3L and TLE6 isoform 1. The SCMC may facilitate translocation of its components between the nuclear and cytoplasmic compartments. Forms a scaffold complex with OOEP/FLOPED, and interacts with BLM and TRIM25 at DNA replication forks. Interacts with PARP1; the interaction is increased following the formation of DNA double-strand breaks. Interacts with NUMA1. As to expression, expression appears to be maximal in germinal vesicle oocytes, it tails off through metaphase II oocytes and is undetectable following the completion of the oocyte to embryo transition.

The protein localises to the cytoplasm. It localises to the cell cortex. It is found in the nucleus. The protein resides in the mitochondrion. Its subcellular location is the cytoskeleton. The protein localises to the microtubule organizing center. It localises to the centrosome. It is found in the chromosome. Functionally, component of the subcortical maternal complex (SCMC), a multiprotein complex that plays a key role in early embryonic development. The SCMC complex is a structural constituent of cytoplasmic lattices, which consist in fibrous structures found in the cytoplasm of oocytes and preimplantation embryos. They are required to store maternal proteins critical for embryonic development, such as proteins that control epigenetic reprogramming of the preimplantation embryo, and prevent their degradation or activation. KHDC3 ensures proper spindle assembly by regulating the localization of AURKA via RHOA signaling and of PLK1 via a RHOA-independent process. Required for the localization of MAD2L1 to kinetochores to enable spindle assembly checkpoint function. As part of the OOEP-KHDC3 scaffold, recruits BLM and TRIM25 to DNA replication forks, thereby promoting the ubiquitination of BLM by TRIM25, enhancing BLM retainment at replication forks and therefore promoting stalled replication fork restart. Regulates homologous recombination-mediated DNA repair via recruitment of RAD51 to sites of DNA double-strand breaks, and sustainment of PARP1 activity, which in turn modulates downstream ATM or ATR activation. Activation of ATM or ATR in response to DNA double-strand breaks may be cell-type specific. Its role in DNA double-strand break repair is independent of its role in restarting stalled replication forks. Promotes neural stem cell neurogenesis and neuronal differentiation in the hippocampus. May regulate normal development of learning, memory and anxiety. Capable of binding RNA. The chain is KH domain-containing protein 3 from Homo sapiens (Human).